A 203-amino-acid chain; its full sequence is Guanylate kinase (203 aa).

Residues Gly3–Thr181 enclose the Guanylate kinase-like domain. ATP is bound at residue Ala10–Ser17.

The protein belongs to the guanylate kinase family.

The protein resides in the cytoplasm. The enzyme catalyses GMP + ATP = GDP + ADP. Its function is as follows. Essential for recycling GMP and indirectly, cGMP. This Xanthomonas oryzae pv. oryzae (strain MAFF 311018) protein is Guanylate kinase.